Consider the following 211-residue polypeptide: Small ribosomal subunit protein eS1 (211 aa).

It belongs to the eukaryotic ribosomal protein eS1 family.

The protein is Small ribosomal subunit protein eS1 of Methanothrix thermoacetophila (strain DSM 6194 / JCM 14653 / NBRC 101360 / PT) (Methanosaeta thermophila).